The primary structure comprises 288 residues: 4-diphosphocytidyl-2-C-methyl-D-erythritol kinase (288 aa).

Residue lysine 8 is part of the active site. 92–102 (PVAAGMAGGST) provides a ligand contact to ATP. Residue aspartate 134 is part of the active site.

Belongs to the GHMP kinase family. IspE subfamily.

It carries out the reaction 4-CDP-2-C-methyl-D-erythritol + ATP = 4-CDP-2-C-methyl-D-erythritol 2-phosphate + ADP + H(+). It participates in isoprenoid biosynthesis; isopentenyl diphosphate biosynthesis via DXP pathway; isopentenyl diphosphate from 1-deoxy-D-xylulose 5-phosphate: step 3/6. In terms of biological role, catalyzes the phosphorylation of the position 2 hydroxy group of 4-diphosphocytidyl-2C-methyl-D-erythritol. The sequence is that of 4-diphosphocytidyl-2-C-methyl-D-erythritol kinase from Clostridium perfringens (strain ATCC 13124 / DSM 756 / JCM 1290 / NCIMB 6125 / NCTC 8237 / Type A).